A 239-amino-acid polypeptide reads, in one-letter code: Protein canopy homolog 4 (239 aa).

An N-terminal signal peptide occupies residues 1–20 (MGPVRLGTLLFILTVYGAWA). 3 disulfide bridges follow: Cys37/Cys195, Cys40/Cys183, and Cys93/Cys155. Residues 199–239 (TWTGKEKITDGQEKTEEEEQDQEEEEMTNTPVHSQHDPEDL) form a disordered region. Basic and acidic residues predominate over residues 201–212 (TGKEKITDGQEK). Acidic residues predominate over residues 213–225 (TEEEEQDQEEEEM).

It belongs to the canopy family. As to quaternary structure, interacts with TLR4.

Its subcellular location is the secreted. Plays a role in the regulation of the cell surface expression of TLR4. The chain is Protein canopy homolog 4 (CNPY4) from Bos taurus (Bovine).